The primary structure comprises 500 residues: MTIFDNYEVWFVIGSQHLYGPETLRQVTQHAEHVVNALNTEAKLPCKLVLKPLGTTPDEITAICRDANYDDRCAGLVVWLHTFSPAKMWINGLTMLNKPLLQFHTQFNAALPWDSIDMDFMNLNQTAHGGREFGFIGARMRQQHAVVTGHWQDKQAHERIGSWMRQAVSKQDTRHLKVCRFGDNMREVAVTDGDKVAAQIKFGFSVNTWAVGDLVQVVNSISDGDVNALVDEYESCYTMTPATQIHGKKRQNVLEAARIELGMKRFLEQGGFHAFTTTFEDLHGLKQLPGLAVQRLMQQGYGFAGEGDWKTAALLRIMKVMSTGLQGGTSFMEDYTYHFEKGNDLVLGSHMLEVCPSIAAEEKPILDVQHLGIGGKDDPARLIFNTQTGPAIVASLIDLGDRYRLLVNCIDTVKTPHSLPKLPVANALWKAQPDLPTASEAWILAGGAHHTVFSHALNLNDMRQFAEMHDIEITVIDNDTRLPAFKDALRWNEVYYGFRR.

Mn(2+)-binding residues include E306, E333, H350, and H450.

Belongs to the arabinose isomerase family. Homohexamer. Requires Mn(2+) as cofactor.

It carries out the reaction beta-L-arabinopyranose = L-ribulose. The protein operates within carbohydrate degradation; L-arabinose degradation via L-ribulose; D-xylulose 5-phosphate from L-arabinose (bacterial route): step 1/3. Its function is as follows. Catalyzes the conversion of L-arabinose to L-ribulose. The protein is L-arabinose isomerase (araA) of Escherichia coli (strain K12).